The chain runs to 401 residues: Phosphoglycerate kinase (401 aa).

Substrate contacts are provided by residues 21–23 (DLN), Arg37, 60–63 (HLGR), Arg119, and Arg152. Residues Lys203, Glu325, and 351–354 (GGDT) contribute to the ATP site.

Belongs to the phosphoglycerate kinase family. In terms of assembly, monomer.

The protein resides in the cytoplasm. The enzyme catalyses (2R)-3-phosphoglycerate + ATP = (2R)-3-phospho-glyceroyl phosphate + ADP. Its pathway is carbohydrate degradation; glycolysis; pyruvate from D-glyceraldehyde 3-phosphate: step 2/5. The polypeptide is Phosphoglycerate kinase (Acidithiobacillus ferrooxidans (strain ATCC 23270 / DSM 14882 / CIP 104768 / NCIMB 8455) (Ferrobacillus ferrooxidans (strain ATCC 23270))).